The chain runs to 338 residues: 1-aminocyclopropane-1-carboxylate deaminase (338 aa).

N6-(pyridoxal phosphate)lysine is present on K51. Residue S78 is the Nucleophile of the active site.

This sequence belongs to the ACC deaminase/D-cysteine desulfhydrase family. Homotrimer. Pyridoxal 5'-phosphate serves as cofactor.

It carries out the reaction 1-aminocyclopropane-1-carboxylate + H2O = 2-oxobutanoate + NH4(+). In terms of biological role, catalyzes a cyclopropane ring-opening reaction, the irreversible conversion of 1-aminocyclopropane-1-carboxylate (ACC) to ammonia and alpha-ketobutyrate. Allows growth on ACC as a nitrogen source. The sequence is that of 1-aminocyclopropane-1-carboxylate deaminase from Variovorax paradoxus (strain S110).